Here is a 75-residue protein sequence, read N- to C-terminus: Exodeoxyribonuclease 7 small subunit (75 aa).

Belongs to the XseB family. Heterooligomer composed of large and small subunits.

Its subcellular location is the cytoplasm. It carries out the reaction Exonucleolytic cleavage in either 5'- to 3'- or 3'- to 5'-direction to yield nucleoside 5'-phosphates.. Functionally, bidirectionally degrades single-stranded DNA into large acid-insoluble oligonucleotides, which are then degraded further into small acid-soluble oligonucleotides. This chain is Exodeoxyribonuclease 7 small subunit, found in Chlamydia abortus (strain DSM 27085 / S26/3) (Chlamydophila abortus).